The primary structure comprises 445 residues: Histidinol dehydrogenase (445 aa).

3 residues coordinate NAD(+): Tyr138, Gln199, and Asn222. Substrate contacts are provided by Ser245, Gln267, and His270. 2 residues coordinate Zn(2+): Gln267 and His270. Active-site proton acceptor residues include Glu335 and His336. Substrate contacts are provided by His336, Asp369, Glu423, and His428. Asp369 contributes to the Zn(2+) binding site. His428 serves as a coordination point for Zn(2+).

This sequence belongs to the histidinol dehydrogenase family. Zn(2+) is required as a cofactor.

It catalyses the reaction L-histidinol + 2 NAD(+) + H2O = L-histidine + 2 NADH + 3 H(+). It functions in the pathway amino-acid biosynthesis; L-histidine biosynthesis; L-histidine from 5-phospho-alpha-D-ribose 1-diphosphate: step 9/9. In terms of biological role, catalyzes the sequential NAD-dependent oxidations of L-histidinol to L-histidinaldehyde and then to L-histidine. The sequence is that of Histidinol dehydrogenase from Burkholderia mallei (strain ATCC 23344).